Reading from the N-terminus, the 314-residue chain is Methionyl-tRNA formyltransferase (314 aa).

Ser111–Pro114 contacts (6S)-5,6,7,8-tetrahydrofolate.

Belongs to the Fmt family.

It carries out the reaction L-methionyl-tRNA(fMet) + (6R)-10-formyltetrahydrofolate = N-formyl-L-methionyl-tRNA(fMet) + (6S)-5,6,7,8-tetrahydrofolate + H(+). Its function is as follows. Attaches a formyl group to the free amino group of methionyl-tRNA(fMet). The formyl group appears to play a dual role in the initiator identity of N-formylmethionyl-tRNA by promoting its recognition by IF2 and preventing the misappropriation of this tRNA by the elongation apparatus. This is Methionyl-tRNA formyltransferase from Coxiella burnetii (strain CbuG_Q212) (Coxiella burnetii (strain Q212)).